Reading from the N-terminus, the 1032-residue chain is Calmodulin-binding transcription activator 3 (1032 aa).

The segment at residues 15 to 141 (VGQILSEARH…YLEVKGSRVS (127 aa)) is a DNA-binding region (CG-1). The segment at 146-197 (RMQRTEDAARSPQETGDALTSEHDGYASCSFNQNDHSNHSQTTDSASVNGFH) is disordered. Residues 174 to 195 (CSFNQNDHSNHSQTTDSASVNG) show a composition bias toward polar residues. Position 272 is a phosphoserine (Ser272). ANK repeat units lie at residues 661–690 (GGQG…SVDF), 694–723 (NGWT…APGT), and 733–762 (SGST…RAHV). IQ domains are found at residues 852–881 (VQAA…RIIK) and 875–904 (TRQR…SVGV). The calmodulin-binding stretch occupies residues 900 to 922 (WSVGVLEKVILRWRRKGAGLRGF). Residues 945–987 (KQGRKQTEDRLQKALARVKSMVQYPEARDQYRRLLNVVNDIQE) are a coiled coil. Ser964 is modified (phosphoserine).

This sequence belongs to the CAMTA family. As to quaternary structure, interacts with SR1IP1. Interacts with DSC1. Post-translationally, ubiquinated during pathogen infection. Ubiquitination leads to its subsequent proteasome-dependent degradation, thus allowing the establishment of plant defense response. As to expression, expressed in roots, stems, leaves, carpels, and siliques, but not in stigmas or other parts of the flower.

Its subcellular location is the nucleus. Functionally, transcription activator that binds to the DNA consensus sequence 5'-[ACG]CGCG[GTC]-3'. Binds calmodulin in a calcium-dependent manner in vitro. Regulates transcriptional activity in response to calcium signals. Involved in freezing tolerance in association with CAMTA1 and CAMTA2. Required for the cold-induced expression of DREB1B/CBF1, DREB1C/CBF2, ZAT12 and GOLS3. Involved in response to cold. Contributes together with CAMTA5 to the positive regulation of the cold-induced expression of DREB1A/CBF3, DREB1B/CBF1 and DREB1C/CBF2. Involved together with CAMTA2 and CAMTA4 in the positive regulation of a general stress response (GSR). Involved in the regulation of GSR amplitude downstream of MEKK1. Involved in the regulation of a set of genes involved in defense responses against pathogens. Involved in the regulation of both basal resistance and systemic acquired resistance (SAR). Acts as negative regulator of plant immunity. Binds to the promoter of the defense-related gene EDS1 and represses its expression. Binds to the promoter of the defense-related gene NDR1 and represses its expression. Involved in defense against insects. Required for tolerance to the generalist herbivore Trichoplusia ni, and contributes to the positive regulation of genes associated with glucosinolate metabolism. Required for tolerance to Bradysia impatiens larvae. Mediates herbivore-induced wound response. Required for wound-induced jasmonate accumulation. Involved in the regulation of ethylene-induced senescence by binding to the promoter of the senescence-inducer gene EIN3 and repressing its expression. This is Calmodulin-binding transcription activator 3 from Arabidopsis thaliana (Mouse-ear cress).